We begin with the raw amino-acid sequence, 410 residues long: Dipeptidase ataJ (410 aa).

3 residues coordinate Zn(2+): histidine 27, aspartate 29, and glutamate 138. Residue histidine 165 coordinates substrate. The interval 180–200 (TSSPWSEYGGQTHDPGDEPSR) is disordered. The substrate site is built by arginine 258 and aspartate 318.

Belongs to the metallo-dependent hydrolases superfamily. Peptidase M19 family. Requires Zn(2+) as cofactor.

The catalysed reaction is an L-aminoacyl-L-amino acid + H2O = 2 an L-alpha-amino acid. It participates in mycotoxin biosynthesis. In terms of biological role, dipeptidase; part of the gene cluster that mediates the biosynthesis of acetylaranotin, a member of the epipolythiodioxopiperazine (ETP) class of toxins characterized by a disulfide-bridged cyclic dipeptide. The first step of acetylaranotin biosynthesis is performed by the NRPS ataP which produces diketopiperazine cyclo-L-Phe-L-Phe via the condensation of 2 phenylalanines (L-Phe). The ataC domain of ataTC then catalyzes the formation of bishydroxylation of cyclo-L-Phe-L-Phe. The glutathione S-transferase domain ataG in ataIMG further catalyzes the conjugation of two glutathiones to the bishydroxylated intermediate. Next, the dipeptidase ataJ removes the Glu residues. The following step is performed by the carbon sulfur lyase domain ataI of ataIMG which may convert the bis-cysteinyl adduct to yield an epidithiol intermediate. The ataT domain from ataTC then catalyzes the oxidation of the free dithiols, followed by a cyclization step catalyzed by the cytochrome P450 ataF. AtaF probably acts as an epoxidase to promote a dual epoxidation formation at C8 and C9 along with C8' and C9', followed by the spontaneous nucleophilic attack of the amide nitrogens N10 and N10' to yield an intermediate with the pyrrolidine partial structure. The final steps of acetylaranotin biosynthesis involve the acetylation and ring rearrangement of an epitetrathiodiketopiperazine intermediate to produce acetylaranotin. AtaH probably catalyzes the acetylation of epitetrathiodiketopiperazine to produce a diacetate and ataY is responsible for the formation of the dihydrooxepin moiety that converts the diacetate intermediate to acetylaranotin via acetylapoaranotin. Both enzymes could function independently in the absence of the other. The acetylaranotin bis-thiomethyltransferase ataS located outside of acetylaranotin gene cluster is the main thiomethyltransferase responsible for converting acetylaranotin and its related intermediates to their methylated forms. This Aspergillus terreus (strain NIH 2624 / FGSC A1156) protein is Dipeptidase ataJ.